Here is a 371-residue protein sequence, read N- to C-terminus: Transcription factor MYB12 (371 aa).

HTH myb-type domains are found at residues 9–61 (KVGI…INYL) and 62–116 (RSDL…SRKL). DNA-binding regions (H-T-H motif) lie at residues 37-61 (WRSL…INYL) and 89-112 (WSLI…NSHL). The tract at residues 136–183 (NASSAPPPPQAKRRLGRTSRSAMKPKIHRTKTRKTKKTSAPPEPNADV) is disordered. The segment covering 146–172 (AKRRLGRTSRSAMKPKIHRTKTRKTKK) has biased composition (basic residues).

In terms of tissue distribution, expressed in stems and flower buds. Expressed in seedlings, roots, cotyledons and apical meristems.

It localises to the nucleus. Its function is as follows. Flavonol-specific transcription activator involved in the regulation of several genes of flavonoid biosynthesis. Activates the expression of CHS, CHI, F3H and FLS1. Controls flavonol biosynthesis mainly in the root. Confers tolerance to UV-B. The protein is Transcription factor MYB12 of Arabidopsis thaliana (Mouse-ear cress).